A 239-amino-acid chain; its full sequence is Lactate utilization protein A 1 (239 aa).

The protein belongs to the LutA/YkgE family.

In terms of biological role, is involved in L-lactate degradation and allows cells to grow with lactate as the sole carbon source. This chain is Lactate utilization protein A 1, found in Bacillus anthracis (strain A0248).